The sequence spans 94 residues: MSRICELTGKGRQVGHNVSHANNKTKRLFLPNLQNVTLLSEKLDRSFKFRVSTHGLRSVEHNGGLDNWLLKQSDTKLSARALKVKRELVKASAA.

Belongs to the bacterial ribosomal protein bL28 family.

This is Large ribosomal subunit protein bL28 from Novosphingobium aromaticivorans (strain ATCC 700278 / DSM 12444 / CCUG 56034 / CIP 105152 / NBRC 16084 / F199).